Consider the following 8515-residue polypeptide: Nonribosomal peptide synthetase 8 (8515 aa).

Adenylation stretches follow at residues 59–736 and 1163–1705; these read REHH…YRCS and AKLS…EWVE. Residues 587–1159 form a condensation 1 region; the sequence is RRVVQWLENL…TVGEVALVGD (573 aa). In terms of domain architecture, Carrier 1 spans 615–691; that stretch reads EPETAMERRL…ELAPRVKVAE (77 aa). An O-(pantetheine 4'-phosphoryl)serine modification is found at Ser-652. Residues 1732–1808 enclose the Carrier 2 domain; the sequence is RGLTPTETVI…KLGRHADHSS (77 aa). O-(pantetheine 4'-phosphoryl)serine is present on Ser-1769. The tract at residues 1830–2273 is epimerase 1; the sequence is LSPIQQWFFE…TLYDCPLAAL (444 aa). The tract at residues 2301 to 2709 is condensation 2; the sequence is SHIQEGILLS…RSPEAVLHDL (409 aa). The segment at 2733 to 3266 is adenylation 3; that stretch reads QCLHWLIEQW…RMILSWLSEP (534 aa). The 77-residue stretch at 3286 to 3362 folds into the Carrier 3 domain; sequence TTLGPVEKQM…KVTPRTISLS (77 aa). An O-(pantetheine 4'-phosphoryl)serine modification is found at Ser-3323. A condensation 3 region spans residues 3406–3819; sequence SPMQEGILLA…DNSGCSVKTV (414 aa). The Carrier 4 domain occupies 3857-3933; sequence EPTNLIALTV…EVFEHARFSD (77 aa). Ser-3894 bears the O-(pantetheine 4'-phosphoryl)serine mark. Residues 3953–4392 form an epimerase 2 region; the sequence is LSPIQKLHFH…TPSDFQLLSL (440 aa). Residues 4420 to 4823 form a condensation 4 region; it reads PCSPMQEGIL…ARPRARLGTI (404 aa). The segment at 4837–5363 is adenylation 4; that stretch reads WNEQARRPVV…RKVNKWLESF (527 aa). The Carrier 5 domain maps to 5385-5461; that stretch reads PPLTPIQQTI…SLAACATAII (77 aa). Ser-5422 bears the O-(pantetheine 4'-phosphoryl)serine mark. The segment at 5508–5923 is condensation 5; the sequence is SPMQEGILFS…SLVDHLSLCS (416 aa). Positions 5941 to 6459 are adenylation 5; the sequence is ELRQCLHELI…GKVDRQALRR (519 aa). The Carrier 6 domain maps to 6482-6558; the sequence is PISTAEEQQM…DLATLLESPA (77 aa). Ser-6519 carries the post-translational modification O-(pantetheine 4'-phosphoryl)serine. Positions 6606–6992 are condensation 6; that stretch reads CTPLQESLMA…SQMKSVMGTL (387 aa). The tract at residues 7030-7544 is adenylation 6; sequence VEDLIISRAQ…SSGKLARKGV (515 aa). Residues 7575 to 7651 form the Carrier 7 domain; the sequence is IASSSVERAI…HLASREDLTA (77 aa). Ser-7612 is modified (O-(pantetheine 4'-phosphoryl)serine). The tract at residues 7670–8119 is epimerase 3; sequence LTPIQRFFFC…DYPRARLDYT (450 aa). The segment at 8164-8504 is condensation 7; the sequence is HFIWKIAGTK…DPTSPLQFAD (341 aa). A compositionally biased stretch (polar residues) spans 8488 to 8500; sequence AVNSVSSDPTSPL. Positions 8488–8515 are disordered; that stretch reads AVNSVSSDPTSPLQFADGQDPMPVSHQP.

Belongs to the NRP synthetase family.

In terms of biological role, nonribosomal peptide synthesis (NRPS) is a key mechanism responsible for the biosynthesis of bioactive metabolites which are potentially contributing to organismal virulence. However, contarary to other nonribosomal peptide synthases, NRPS8 does not encode a secreted peptide, but has more a structural role since it is involved in germ tube formation. This chain is Nonribosomal peptide synthetase 8 (NRPS8), found in Aspergillus fumigatus (strain ATCC MYA-4609 / CBS 101355 / FGSC A1100 / Af293) (Neosartorya fumigata).